The following is an 835-amino-acid chain: Protein translocase subunit SecA (835 aa).

ATP is bound by residues Gln-85, 103-107 (GEGKT), and Asp-492. Residues 788–807 (VQGEAVHPSSDGEEAKKKPV) are disordered. Zn(2+) contacts are provided by Cys-819, Cys-821, Cys-830, and Cys-831.

This sequence belongs to the SecA family. As to quaternary structure, monomer and homodimer. Part of the essential Sec protein translocation apparatus which comprises SecA, SecYEG and auxiliary proteins SecDF. Other proteins may also be involved. Zn(2+) serves as cofactor.

The protein localises to the cell membrane. The protein resides in the cytoplasm. It catalyses the reaction ATP + H2O + cellular proteinSide 1 = ADP + phosphate + cellular proteinSide 2.. In terms of biological role, part of the Sec protein translocase complex. Interacts with the SecYEG preprotein conducting channel. Has a central role in coupling the hydrolysis of ATP to the transfer of proteins into and across the cell membrane, serving as an ATP-driven molecular motor driving the stepwise translocation of polypeptide chains across the membrane. This chain is Protein translocase subunit SecA, found in Bacillus cereus (strain ATCC 10987 / NRS 248).